Here is a 116-residue protein sequence, read N- to C-terminus: Large ribosomal subunit protein bL20 (116 aa).

Belongs to the bacterial ribosomal protein bL20 family.

Binds directly to 23S ribosomal RNA and is necessary for the in vitro assembly process of the 50S ribosomal subunit. It is not involved in the protein synthesizing functions of that subunit. This Helicobacter pylori (strain G27) protein is Large ribosomal subunit protein bL20.